The following is a 457-amino-acid chain: Multidrug resistance protein MdtK (457 aa).

The next 12 helical transmembrane spans lie at leucine 11–valine 31, isoleucine 53–alanine 73, phenylalanine 93–isoleucine 113, alanine 127–leucine 147, proline 159–isoleucine 179, glycine 190–leucine 210, leucine 249–valine 269, isoleucine 276–threonine 296, isoleucine 313–threonine 333, leucine 357–valine 377, isoleucine 387–alanine 407, and glycine 417–valine 437.

The protein belongs to the multi antimicrobial extrusion (MATE) (TC 2.A.66.1) family. MdtK subfamily.

The protein localises to the cell inner membrane. Its function is as follows. Multidrug efflux pump that functions probably as a Na(+)/drug antiporter. In Pectobacterium atrosepticum (strain SCRI 1043 / ATCC BAA-672) (Erwinia carotovora subsp. atroseptica), this protein is Multidrug resistance protein MdtK.